A 695-amino-acid polypeptide reads, in one-letter code: Elongation factor G (695 aa).

In terms of domain architecture, tr-type G spans 9 to 283 (EKIRNIGIVA…AVIDYLPSPL (275 aa)). GTP-binding positions include 18–25 (AHIDAGKT), 82–86 (DTPGH), and 136–139 (NKMD).

It belongs to the TRAFAC class translation factor GTPase superfamily. Classic translation factor GTPase family. EF-G/EF-2 subfamily.

Its subcellular location is the cytoplasm. In terms of biological role, catalyzes the GTP-dependent ribosomal translocation step during translation elongation. During this step, the ribosome changes from the pre-translocational (PRE) to the post-translocational (POST) state as the newly formed A-site-bound peptidyl-tRNA and P-site-bound deacylated tRNA move to the P and E sites, respectively. Catalyzes the coordinated movement of the two tRNA molecules, the mRNA and conformational changes in the ribosome. The protein is Elongation factor G of Petrotoga mobilis (strain DSM 10674 / SJ95).